Here is a 267-residue protein sequence, read N- to C-terminus: 4-hydroxy-tetrahydrodipicolinate reductase (267 aa).

Residue 10–15 (GCLGKQ) participates in NAD(+) binding. Arg37 lines the NADP(+) pocket. Residues 99 to 101 (GTT) and 122 to 125 (TTNV) each bind NAD(+). Catalysis depends on His154, which acts as the Proton donor/acceptor. His155 is a (S)-2,3,4,5-tetrahydrodipicolinate binding site. Catalysis depends on Lys158, which acts as the Proton donor. Residue 164–165 (GT) participates in (S)-2,3,4,5-tetrahydrodipicolinate binding.

This sequence belongs to the DapB family.

It localises to the cytoplasm. The enzyme catalyses (S)-2,3,4,5-tetrahydrodipicolinate + NAD(+) + H2O = (2S,4S)-4-hydroxy-2,3,4,5-tetrahydrodipicolinate + NADH + H(+). It catalyses the reaction (S)-2,3,4,5-tetrahydrodipicolinate + NADP(+) + H2O = (2S,4S)-4-hydroxy-2,3,4,5-tetrahydrodipicolinate + NADPH + H(+). It functions in the pathway amino-acid biosynthesis; L-lysine biosynthesis via DAP pathway; (S)-tetrahydrodipicolinate from L-aspartate: step 4/4. Functionally, catalyzes the conversion of 4-hydroxy-tetrahydrodipicolinate (HTPA) to tetrahydrodipicolinate. This is 4-hydroxy-tetrahydrodipicolinate reductase from Ehrlichia canis (strain Jake).